The sequence spans 201 residues: Cytochrome c oxidase assembly protein CtaG (201 aa).

Over 1-13 the chain is Cytoplasmic; it reads MTDQGENEKKQRR. A helical; Signal-anchor for type II membrane protein transmembrane segment spans residues 14–36; that stretch reads SNATIAVACLSFFVCMIGAAYAS. Topologically, residues 37 to 201 are periplasmic; sequence VPLYRIFCQV…KAVGSTRNGG (165 aa).

The protein belongs to the COX11/CtaG family.

The protein localises to the cell inner membrane. Exerts its effect at some terminal stage of cytochrome c oxidase synthesis, probably by being involved in the insertion of the copper B into subunit I. This is Cytochrome c oxidase assembly protein CtaG from Brucella suis (strain ATCC 23445 / NCTC 10510).